The following is a 1499-amino-acid chain: ABC multidrug transporter A-2 (1499 aa).

Disordered stretches follow at residues 1 to 66 (MAMQ…IDQE) and 80 to 107 (QISQ…NSDK). Positions 16-30 (ISSSAGQEVASTIRR) are enriched in polar residues. Positions 31 to 51 (QFTDADADRIVETPLGEKADS) are enriched in basic and acidic residues. Positions 80-94 (QISQKSAGPTNTFLD) are enriched in polar residues. One can recognise an ABC transporter 1 domain in the interval 166 to 415 (LRSILGCRNR…FIDMGFDCPD (250 aa)). N339 is a glycosylation site (N-linked (GlcNAc...) asparagine). Transmembrane regions (helical) follow at residues 526-546 (MTLA…SVFY), 561-581 (LLFF…LTLW), 606-626 (MIVD…ILYF), 635-655 (GHFF…SNIF), and 669-689 (MVPS…TIPV). A glycan (N-linked (GlcNAc...) asparagine) is linked at N763. Residues 778–798 (GIILGFFFFFLAAYIICSELV) form a helical membrane-spanning segment. The 244-residue stretch at 857 to 1100 (FHWQDVCYDI…LIKYFENKGS (244 aa)) folds into the ABC transporter 2 domain. ATP is bound at residue 893–900 (GVTGAGKT). 5 helical membrane-spanning segments follow: residues 1193–1213 (YIYS…FTFW), 1227–1247 (FAIF…MPYF), 1268–1288 (AFML…AVPA), 1317–1337 (LLIL…IAGI), and 1353–1373 (LCLI…FWIF). N1414 carries N-linked (GlcNAc...) asparagine glycosylation. The chain crosses the membrane as a helical span at residues 1466–1486 (GLLFVYIVFNIFAAIFLYWLI).

It belongs to the ABC transporter superfamily. ABCG family. PDR (TC 3.A.1.205) subfamily.

Its subcellular location is the cell membrane. It carries out the reaction itraconazole(in) + ATP + H2O = itraconazole(out) + ADP + phosphate + H(+). The enzyme catalyses voriconazole(in) + ATP + H2O = voriconazole(out) + ADP + phosphate + H(+). Its activity is regulated as follows. The efflux inhibitor FK506 impairs the transport activity. Its function is as follows. Pleiotropic ABC efflux transporter that confers resistance to structurally and functionally unrelated compounds including azoles such as itraconazole, posaconazole, and voriconazole. This chain is ABC multidrug transporter A-2, found in Aspergillus fumigatus (strain ATCC MYA-4609 / CBS 101355 / FGSC A1100 / Af293) (Neosartorya fumigata).